The following is a 431-amino-acid chain: Adenylosuccinate synthetase (431 aa).

GTP contacts are provided by residues 12–18 (GDEGKGK) and 40–42 (GHT). Asp13 serves as the catalytic Proton acceptor. Mg(2+) is bound by residues Asp13 and Gly40. IMP contacts are provided by residues 13-16 (DEGK), 38-41 (NAGH), Thr130, Arg144, Gln225, Thr240, and Arg304. The active-site Proton donor is the His41. Residue 300 to 306 (ATTGRPR) participates in substrate binding. GTP is bound by residues Arg306, 332 to 334 (KLD), and 414 to 416 (SVG).

This sequence belongs to the adenylosuccinate synthetase family. As to quaternary structure, homodimer. The cofactor is Mg(2+).

It localises to the cytoplasm. The catalysed reaction is IMP + L-aspartate + GTP = N(6)-(1,2-dicarboxyethyl)-AMP + GDP + phosphate + 2 H(+). The protein operates within purine metabolism; AMP biosynthesis via de novo pathway; AMP from IMP: step 1/2. Functionally, plays an important role in the de novo pathway of purine nucleotide biosynthesis. Catalyzes the first committed step in the biosynthesis of AMP from IMP. This chain is Adenylosuccinate synthetase, found in Geotalea daltonii (strain DSM 22248 / JCM 15807 / FRC-32) (Geobacter daltonii).